The primary structure comprises 55 residues: Conotoxin vc5b (55 aa).

A signal peptide spans 1 to 15; the sequence is VILLLLIASAPSVDA. Positions 16–41 are excised as a propeptide; the sequence is QPKTKDDVPLAPLHDNAKSALQHLNQ. Glutamine 53 is subject to Glutamine amide.

In terms of processing, contains 2 disulfide bonds that can be either 'C1-C3, C2-C4' or 'C1-C4, C2-C3', since these disulfide connectivities have been observed for conotoxins with cysteine framework V (for examples, see AC P0DQQ7 and AC P81755). Expressed by the venom duct.

The protein localises to the secreted. This chain is Conotoxin vc5b, found in Conus victoriae (Queen Victoria cone).